The chain runs to 304 residues: Quinolinate synthase (304 aa).

Iminosuccinate is bound by residues His-24 and Ser-41. Residue Cys-86 coordinates [4Fe-4S] cluster. Iminosuccinate-binding positions include 112–114 and Ser-129; that span reads YVN. Cys-171 serves as a coordination point for [4Fe-4S] cluster. Iminosuccinate-binding positions include 197 to 199 and Thr-214; that span reads HPE. Cys-259 serves as a coordination point for [4Fe-4S] cluster.

The protein belongs to the quinolinate synthase family. Type 2 subfamily. Requires [4Fe-4S] cluster as cofactor.

It is found in the cytoplasm. It carries out the reaction iminosuccinate + dihydroxyacetone phosphate = quinolinate + phosphate + 2 H2O + H(+). The protein operates within cofactor biosynthesis; NAD(+) biosynthesis; quinolinate from iminoaspartate: step 1/1. Functionally, catalyzes the condensation of iminoaspartate with dihydroxyacetone phosphate to form quinolinate. This is Quinolinate synthase from Geobacter metallireducens (strain ATCC 53774 / DSM 7210 / GS-15).